The primary structure comprises 404 residues: Formate-dependent phosphoribosylglycinamide formyltransferase (404 aa).

N(1)-(5-phospho-beta-D-ribosyl)glycinamide is bound by residues Glu25 to Leu26 and Glu85. ATP contacts are provided by residues Arg118, Lys159, Ser164 to Gln169, Glu199 to Ile202, and Glu207. In terms of domain architecture, ATP-grasp spans Arg123–Leu318. Mg(2+)-binding residues include Glu277 and Glu289. N(1)-(5-phospho-beta-D-ribosyl)glycinamide is bound by residues Asp296, Lys365, and Arg372–Arg373. The disordered stretch occupies residues Thr384–Lys404. Over residues Lys392 to Lys404 the composition is skewed to low complexity.

It belongs to the PurK/PurT family. As to quaternary structure, homodimer.

It carries out the reaction N(1)-(5-phospho-beta-D-ribosyl)glycinamide + formate + ATP = N(2)-formyl-N(1)-(5-phospho-beta-D-ribosyl)glycinamide + ADP + phosphate + H(+). It functions in the pathway purine metabolism; IMP biosynthesis via de novo pathway; N(2)-formyl-N(1)-(5-phospho-D-ribosyl)glycinamide from N(1)-(5-phospho-D-ribosyl)glycinamide (formate route): step 1/1. Involved in the de novo purine biosynthesis. Catalyzes the transfer of formate to 5-phospho-ribosyl-glycinamide (GAR), producing 5-phospho-ribosyl-N-formylglycinamide (FGAR). Formate is provided by PurU via hydrolysis of 10-formyl-tetrahydrofolate. This is Formate-dependent phosphoribosylglycinamide formyltransferase from Paraburkholderia xenovorans (strain LB400).